Reading from the N-terminus, the 283-residue chain is 4-diphosphocytidyl-2-C-methyl-D-erythritol kinase (283 aa).

Lys9 is an active-site residue. ATP is bound at residue 93–103 (PIAAGLAGGSS). Asp135 is an active-site residue.

The protein belongs to the GHMP kinase family. IspE subfamily.

The catalysed reaction is 4-CDP-2-C-methyl-D-erythritol + ATP = 4-CDP-2-C-methyl-D-erythritol 2-phosphate + ADP + H(+). It functions in the pathway isoprenoid biosynthesis; isopentenyl diphosphate biosynthesis via DXP pathway; isopentenyl diphosphate from 1-deoxy-D-xylulose 5-phosphate: step 3/6. Catalyzes the phosphorylation of the position 2 hydroxy group of 4-diphosphocytidyl-2C-methyl-D-erythritol. This Macrococcus caseolyticus (strain JCSC5402) (Macrococcoides caseolyticum) protein is 4-diphosphocytidyl-2-C-methyl-D-erythritol kinase.